The chain runs to 364 residues: Developmentally-regulated GTP-binding protein 2 (364 aa).

Lysine 21 carries the (3S)-3-hydroxylysine modification. The 226-residue stretch at 63–288 folds into the OBG-type G domain; the sequence is ARVALIGFPS…LLEMLWEYLA (226 aa). GTP-binding positions include 69 to 76, 94 to 98, 115 to 118, 246 to 249, and 269 to 271; these read GFPSVGKS, FTTLT, DLPG, NKID, and SCG. Mg(2+) contacts are provided by serine 76 and threonine 96. The TGS domain maps to 288 to 363; the sequence is ALTCIYTKKR…EHEDVIQIVK (76 aa).

Belongs to the TRAFAC class OBG-HflX-like GTPase superfamily. OBG GTPase family. Interacts with RWDD1; this interaction confers protection to polyubiquitination and proteolytic degradation. Interacts with JMJD7; this interaction is direct. Mg(2+) is required as a cofactor. Post-translationally, polyubiquitinated. In terms of processing, hydroxylated (with S stereochemistry) at C-3 of Lys-21 by JMJD7.

The protein localises to the nucleus. It localises to the cytoplasm. It catalyses the reaction GTP + H2O = GDP + phosphate + H(+). Functionally, catalyzes the conversion of GTP to GDP through hydrolysis of the gamma-phosphate bond in GTP. When hydroxylated at C-3 of 'Lys-21' by JMJD7, may bind to RNA and play a role in translation. The polypeptide is Developmentally-regulated GTP-binding protein 2 (DRG2) (Bos taurus (Bovine)).